A 396-amino-acid polypeptide reads, in one-letter code: S-adenosylmethionine synthase (396 aa).

His-16 contacts ATP. Asp-18 contacts Mg(2+). K(+) is bound at residue Glu-44. The L-methionine site is built by Glu-57 and Gln-100. Residues 100–110 are flexible loop; it reads QSPDINQGVDR. ATP-binding positions include 165–167, Asp-240, 246–247, Ala-263, and Lys-267; these read DAK and RK. Asp-240 contributes to the L-methionine binding site. Residue Lys-271 coordinates L-methionine.

The protein belongs to the AdoMet synthase family. As to quaternary structure, homotetramer; dimer of dimers. The cofactor is Mg(2+). K(+) is required as a cofactor.

It localises to the cytoplasm. The catalysed reaction is L-methionine + ATP + H2O = S-adenosyl-L-methionine + phosphate + diphosphate. Its pathway is amino-acid biosynthesis; S-adenosyl-L-methionine biosynthesis; S-adenosyl-L-methionine from L-methionine: step 1/1. Functionally, catalyzes the formation of S-adenosylmethionine (AdoMet) from methionine and ATP. The overall synthetic reaction is composed of two sequential steps, AdoMet formation and the subsequent tripolyphosphate hydrolysis which occurs prior to release of AdoMet from the enzyme. The chain is S-adenosylmethionine synthase from Pseudomonas fluorescens (strain SBW25).